We begin with the raw amino-acid sequence, 593 residues long: Mono(ADP-ribosyl)transferase SpvB (593 aa).

A disordered region spans residues 361-384 (PVNNMMPPPPPPPPPMMGGNSSRP). The segment covering 366 to 376 (MPPPPPPPPPM) has biased composition (pro residues). The TR mART core domain occupies 375 to 578 (PMMGGNSSRP…LRLSDDATAD (204 aa)). Catalysis depends on residues Arg-473, Ser-503, and Glu-540.

Belongs to the SpvB family.

The protein resides in the secreted. It catalyses the reaction L-arginyl-[protein] + NAD(+) = N(omega)-(ADP-D-ribosyl)-L-arginyl-[protein] + nicotinamide + H(+). Its function is as follows. Mono-ADP-ribosylates muscle and non-muscle actin. ADP-ribosylates Chinese hamster ovary and HeLa cell actin as well as rabbit muscle, porcine heart actin and non-muscle beta- and gamma-actin. ADP-ribosylation of actin prevents the polymerization of G actin to F actin, causing actin filament depolymerization, destruction of the cytoskeleton and cytotoxicity; this requires only the C-terminal 120 residues. Does not possess NAD(+)-glycohydrolase activity, unlike most mART enzymes. The sequence is that of Mono(ADP-ribosyl)transferase SpvB (spvB) from Salmonella dublin.